Here is a 460-residue protein sequence, read N- to C-terminus: Probable carboxypeptidase TRV_02791 (460 aa).

The signal sequence occupies residues 1–22; that stretch reads MQKTYLWALVSLLASSLVDARS. Asn-98 carries N-linked (GlcNAc...) asparagine glycosylation. Asp-175 is a Zn(2+) binding site. Glu-207 acts as the Proton acceptor in catalysis. Glu-208 serves as a coordination point for Zn(2+). Asn-395 carries N-linked (GlcNAc...) asparagine glycosylation.

The protein belongs to the peptidase M20A family. The cofactor is Zn(2+).

The protein resides in the secreted. The polypeptide is Probable carboxypeptidase TRV_02791 (Trichophyton verrucosum (strain HKI 0517)).